The following is a 926-amino-acid chain: Probable zinc protease PqqL (926 aa).

His79 contacts Zn(2+). Glu82 serves as the catalytic Proton acceptor. Positions 83 and 159 each coordinate Zn(2+).

Belongs to the peptidase M16 family. It depends on Zn(2+) as a cofactor.

The polypeptide is Probable zinc protease PqqL (pqqL) (Haemophilus influenzae (strain ATCC 51907 / DSM 11121 / KW20 / Rd)).